A 194-amino-acid polypeptide reads, in one-letter code: Adenylate kinase (194 aa).

Residue Gly-10–Thr-15 participates in ATP binding. The NMP stretch occupies residues Ser-30–Val-59. Residues Thr-31, Arg-36, Gln-57–Val-59, Gly-85–Arg-88, and Gln-92 each bind AMP. The tract at residues Ser-126–Asp-142 is LID. Arg-127 is a binding site for ATP. Positions 139 and 150 each coordinate AMP. An ATP-binding site is contributed by Ala-178.

Belongs to the adenylate kinase family. As to quaternary structure, monomer.

The protein resides in the cytoplasm. It carries out the reaction AMP + ATP = 2 ADP. It functions in the pathway purine metabolism; AMP biosynthesis via salvage pathway; AMP from ADP: step 1/1. Catalyzes the reversible transfer of the terminal phosphate group between ATP and AMP. Plays an important role in cellular energy homeostasis and in adenine nucleotide metabolism. In Brucella canis (strain ATCC 23365 / NCTC 10854 / RM-666), this protein is Adenylate kinase.